Reading from the N-terminus, the 276-residue chain is MSARWTTAVLDPQTTGGWAVARSPEGFLVDANGALFPRDWLKRQELDVLCEHGIGHFDGQPVFLLELRTASEVQGCNWQGLRRFMLEGDFDTYKVLGYAAQIGTWAREHRFCGSCGQPMTQIHWERAMYCQPCDLRSYPRISPSMIVLITRGDEVLLARSPRFVTGVYSTLAGFAEPGESAEECLVREVREEVAIEVRNIQYVGSQCWPFPHSMMLGFHAEYAGGEIVMQPDEIEDAQWFSVHDLPPLPAGRSIARYLIDLYVARRLGLAEPVLPA.

Residue R82 participates in substrate binding. Residues C112 and C115 each coordinate Zn(2+). Residue E125 participates in substrate binding. Zn(2+)-binding residues include C130 and C133. A substrate-binding site is contributed by Y138. The Nudix hydrolase domain occupies 139–262 (PRISPSMIVL…SIARYLIDLY (124 aa)). The a divalent metal cation site is built by A172, E188, and E192. A Nudix box motif is present at residues 173-194 (GFAEPGESAEECLVREVREEVA). 206-213 (QCWPFPHS) contacts substrate. A divalent metal cation is bound at residue E233. A255 contacts substrate.

Belongs to the Nudix hydrolase family. NudC subfamily. In terms of assembly, homodimer. Requires Mg(2+) as cofactor. Mn(2+) serves as cofactor. It depends on Zn(2+) as a cofactor.

The enzyme catalyses a 5'-end NAD(+)-phospho-ribonucleoside in mRNA + H2O = a 5'-end phospho-adenosine-phospho-ribonucleoside in mRNA + beta-nicotinamide D-ribonucleotide + 2 H(+). It carries out the reaction NAD(+) + H2O = beta-nicotinamide D-ribonucleotide + AMP + 2 H(+). It catalyses the reaction NADH + H2O = reduced beta-nicotinamide D-ribonucleotide + AMP + 2 H(+). MRNA decapping enzyme that specifically removes the nicotinamide adenine dinucleotide (NAD) cap from a subset of mRNAs by hydrolyzing the diphosphate linkage to produce nicotinamide mononucleotide (NMN) and 5' monophosphate mRNA. The NAD-cap is present at the 5'-end of some mRNAs and stabilizes RNA against 5'-processing. Has preference for mRNAs with a 5'-end purine. Catalyzes the hydrolysis of a broad range of dinucleotide pyrophosphates. This chain is NAD-capped RNA hydrolase NudC, found in Pseudomonas entomophila (strain L48).